The sequence spans 339 residues: Transaldolase (339 aa).

The Schiff-base intermediate with substrate role is filled by Lys135.

Belongs to the transaldolase family. Type 1 subfamily. In terms of assembly, homodimer.

Its subcellular location is the cytoplasm. The catalysed reaction is D-sedoheptulose 7-phosphate + D-glyceraldehyde 3-phosphate = D-erythrose 4-phosphate + beta-D-fructose 6-phosphate. Its pathway is carbohydrate degradation; pentose phosphate pathway; D-glyceraldehyde 3-phosphate and beta-D-fructose 6-phosphate from D-ribose 5-phosphate and D-xylulose 5-phosphate (non-oxidative stage): step 2/3. Transaldolase is important for the balance of metabolites in the pentose-phosphate pathway. The protein is Transaldolase of Prochlorococcus marinus (strain MIT 9211).